Consider the following 117-residue polypeptide: Large ribosomal subunit protein bL20c (117 aa).

Belongs to the bacterial ribosomal protein bL20 family.

It is found in the plastid. Its subcellular location is the chloroplast. In terms of biological role, binds directly to 23S ribosomal RNA and is necessary for the in vitro assembly process of the 50S ribosomal subunit. It is not involved in the protein synthesizing functions of that subunit. The polypeptide is Large ribosomal subunit protein bL20c (rpl20) (Bigelowiella natans (Pedinomonas minutissima)).